We begin with the raw amino-acid sequence, 466 residues long: Ribulose bisphosphate carboxylase (466 aa).

Position 111 (Asn-111) interacts with substrate. Lys-166 functions as the Proton acceptor in the catalytic mechanism. Lys-168 provides a ligand contact to substrate. The Mg(2+) site is built by Lys-191, Asp-193, and Glu-194. Lys-191 is modified (N6-carboxylysine). The active-site Proton acceptor is His-287. Substrate-binding residues include Arg-288, His-321, and Ser-368.

This sequence belongs to the RuBisCO large chain family. Type II subfamily. As to quaternary structure, homodimer. The cofactor is Mg(2+).

The enzyme catalyses 2 (2R)-3-phosphoglycerate + 2 H(+) = D-ribulose 1,5-bisphosphate + CO2 + H2O. It carries out the reaction D-ribulose 1,5-bisphosphate + O2 = 2-phosphoglycolate + (2R)-3-phosphoglycerate + 2 H(+). Functionally, ruBisCO catalyzes two reactions: the carboxylation of D-ribulose 1,5-bisphosphate, the primary event in carbon dioxide fixation, as well as the oxidative fragmentation of the pentose substrate. Both reactions occur simultaneously and in competition at the same active site. In Rhodospirillum rubrum (strain ATCC 11170 / ATH 1.1.1 / DSM 467 / LMG 4362 / NCIMB 8255 / S1), this protein is Ribulose bisphosphate carboxylase.